Consider the following 114-residue polypeptide: Hydrogenase maturation factor HypA (114 aa).

His2 lines the Ni(2+) pocket. Residues Cys73, Cys76, Cys89, and Cys92 each coordinate Zn(2+).

It belongs to the HypA/HybF family.

Functionally, involved in the maturation of [NiFe] hydrogenases. Required for nickel insertion into the metal center of the hydrogenase. The sequence is that of Hydrogenase maturation factor HypA from Desulfitobacterium hafniense (strain DSM 10664 / DCB-2).